A 212-amino-acid chain; its full sequence is uncharacterized protein (212 aa).

S-adenosyl-L-methionine contacts are provided by Gly53, Glu74, and Asp97.

Belongs to the methyltransferase superfamily. YrrT family.

Functionally, could be a S-adenosyl-L-methionine-dependent methyltransferase. This is an uncharacterized protein from Bacillus cereus (strain 03BB102).